The sequence spans 966 residues: MRLKNFPFFVLFFFFCFNSNQSWGLMSSNQQPQFFKLMKNSLFGDALSTWNVYDVGTNYCNFTGVRCDGQGLVTDLDLSGLSLSGIFPDGVCSYFPNLRVLRLSHNHLNKSSSFLNTIPNCSLLRDLNMSSVYLKGTLPDFSQMKSLRVIDMSWNHFTGSFPLSIFNLTDLEYLNFNENPELDLWTLPDSVSKLTKLTHMLLMTCMLHGNIPRSIGNLTSLVDLELSGNFLSGEIPKEIGNLSNLRQLELYYNYHLTGSIPEEIGNLKNLTDIDISVSRLTGSIPDSICSLPNLRVLQLYNNSLTGEIPKSLGNSKTLKILSLYDNYLTGELPPNLGSSSPMIALDVSENRLSGPLPAHVCKSGKLLYFLVLQNRFTGSIPETYGSCKTLIRFRVASNRLVGTIPQGVMSLPHVSIIDLAYNSLSGPIPNAIGNAWNLSELFMQSNRISGVIPHELSHSTNLVKLDLSNNQLSGPIPSEVGRLRKLNLLVLQGNHLDSSIPDSLSNLKSLNVLDLSSNLLTGRIPENLSELLPTSINFSSNRLSGPIPVSLIRGGLVESFSDNPNLCIPPTAGSSDLKFPMCQEPHGKKKLSSIWAILVSVFILVLGVIMFYLRQRMSKNRAVIEQDETLASSFFSYDVKSFHRISFDQREILESLVDKNIVGHGGSGTVYRVELKSGEVVAVKKLWSQSNKDSASEDKMHLNKELKTEVETLGSIRHKNIVKLFSYFSSLDCSLLVYEYMPNGNLWDALHKGFVHLEWRTRHQIAVGVAQGLAYLHHDLSPPIIHRDIKSTNILLDVNYQPKVADFGIAKVLQARGKDSTTTVMAGTYGYLAPEYAYSSKATIKCDVYSFGVVLMELITGKKPVDSCFGENKNIVNWVSTKIDTKEGLIETLDKRLSESSKADMINALRVAIRCTSRTPTIRPTMNEVVQLLIDATPQGGPDMTSKPTTKIKDSIVSDHLTQTRL.

The N-terminal stretch at 1–22 is a signal peptide; it reads MRLKNFPFFVLFFFFCFNSNQS. Over 23–592 the chain is Extracellular; it reads WGLMSSNQQP…QEPHGKKKLS (570 aa). N-linked (GlcNAc...) asparagine glycosylation is present at Asn61. LRR repeat units lie at residues 70–94, 95–120, 122–144, 145–168, 170–194, 195–218, 219–242, 245–267, 268–291, 292–315, 317–339, 341–363, 365–386, 387–411, 412–435, 437–459, 460–483, 484–507, 508–531, and 533–554; these read QGLV…VCSY, FPNL…TIPN, SLLR…FSQM, KSLR…IFNL, DLEY…VSKL, TKLT…IGNL, TSLV…IGNL, LRQL…IGNL, KNLT…ICSL, PNLR…LGNS, TLKI…LGSS, PMIA…VCKS, KLLY…TYGS, CKTL…VMSL, PHVS…IGNA, NLSE…LSHS, TNLV…VGRL, RKLN…LSNL, KSLN…LSEL, and PTSI…LIRG. N-linked (GlcNAc...) asparagine glycans are attached at residues Asn109, Asn120, Asn128, and Asn167. N-linked (GlcNAc...) asparagine glycans are attached at residues Asn217 and Asn241. N-linked (GlcNAc...) asparagine glycosylation is found at Asn269 and Asn301. A glycan (N-linked (GlcNAc...) asparagine) is linked at Asn437. 2 N-linked (GlcNAc...) asparagine glycosylation sites follow: Asn527 and Asn537. A helical membrane pass occupies residues 593-613; the sequence is SIWAILVSVFILVLGVIMFYL. At 614-966 the chain is on the cytoplasmic side; the sequence is RQRMSKNRAV…VSDHLTQTRL (353 aa). The Protein kinase domain occupies 656–934; it reads LVDKNIVGHG…TMNEVVQLLI (279 aa). Residues 662–670 and Lys684 contribute to the ATP site; that span reads VGHGGSGTV. A phosphotyrosine mark is found at Tyr738 and Tyr775. The Proton acceptor role is filled by Asp788. A phosphotyrosine mark is found at Tyr831 and Tyr838. A disordered region spans residues 937–966; that stretch reads TPQGGPDMTSKPTTKIKDSIVSDHLTQTRL.

This sequence belongs to the protein kinase superfamily. Ser/Thr protein kinase family. Interacts with the root-derived peptides CEP1, CEP3 and CEP5. In terms of tissue distribution, expressed in the vasculature, especially in phloem and procambium regions, of stems, leaves, cotyledons, sepals, pedals, pedicels, hypocotyls and roots (in primary and lateral roots, but not in root tips). Expressed in the root from the basal meristem onward. Present in the phloem pole pericycle and in the adjacent phloem.

Its subcellular location is the cell membrane. It carries out the reaction L-tyrosyl-[protein] + ATP = O-phospho-L-tyrosyl-[protein] + ADP + H(+). Receptor kinase involved in the perception of C-terminally encoded plant signaling peptide (CEP) and subsequent regulation of root and shoot development. Required for xylem and phloem cell files morphology and organization, probably by preventing ectopic lignification in phloem cells. Together with CEPR2, mediates systemic nitrogen (N)-demand signaling upon the perception of root-derived peptides (e.g. CEP1) via the up-regulation of genes involved in N uptake and assimilation pathways. Positively regulates lateral root initiation and development; probably repressed by the signaling peptide CEP5. This is Receptor protein-tyrosine kinase CEPR1 from Arabidopsis thaliana (Mouse-ear cress).